The sequence spans 344 residues: MAPSKQYSEGGQLQLMDAERIEEEEECFESIDKLISQGINSGDVKKLQDAGIYTCNGLMMHTKKSLTGIKGLSEAKVDKICEAAEKLLSQGFITGSDLLIKRKSVVRITTGSQALDKLLGGGIETLCITEAFGEFRSGKTQLAHTLCVSAQLPIHMHGGNGKVAYIDTEGTFRPERIVPIAERFGMDANAVLDNIIYARAYTYEHQYNLLLGLAAKMAEEPFRLLIVDSVIALFRVDFSGRGELAERQQKLAQMLSRLTKIAEEFNVAVYITNQVIADPGGGMFITDLKKPAGGHVLAHAATIRLMLRKGKGEQRVCKIFDAPNLPEGEAVFQVTSGGIMDAKD.

133-140 (GEFRSGKT) contributes to the ATP binding site. Arginine 235 contributes to the dsDNA binding site. SsDNA-binding residues include arginine 235, phenylalanine 238, arginine 241, arginine 247, and arginine 315. Residues arginine 241 and arginine 247 each coordinate dsDNA.

It belongs to the RecA family. DMC1 subfamily. In terms of tissue distribution, expressed in meiotic young panicles.

The protein resides in the nucleus. Functionally, recombinase that may participate in meiotic recombination, specifically in homologous strand assimilation, which is required for the resolution of meiotic double-strand breaks. Exhibits DNA-dependent ATPase activity when bound to single-stranded DNA (ssDNA). Mediates renaturation of homologous complementary strands as well as assimilation of single strands into homologous supercoiled duplexes leading to D-loop formation. Binds circular single-stranded DNA (ssDNA) and circular double-stranded DNA (dsDNA) in vitro. Catalyzes DNA homologous renaturation and DNA strand exchange. The rates of these activities are dependent on the state of ATP hydrolysis. Forms helical filaments along ssDNA and dsDNA, and promotes strand exchange between ssDNA and dsDNA with long DNA substrates of several thousand base pairs. The presence of the replication protein A is not required for this activity. Seems to be required for homologous pairing and subsequent chromosome segregation during male meiosis. May be not directly required for homologous pairing during male meiosis. Required for synaptonemal complex assembly and crossover formation. Functions redundantly with DMC1B. This Oryza sativa subsp. japonica (Rice) protein is Meiotic recombination protein DMC1 homolog A.